The following is a 340-amino-acid chain: Dihydroorotate dehydrogenase (quinone) (340 aa).

FMN-binding positions include 61–65 (AGLDK) and threonine 85. Lysine 65 serves as a coordination point for substrate. 110 to 114 (NRMGF) is a binding site for substrate. FMN-binding residues include asparagine 138 and asparagine 171. Residue asparagine 171 participates in substrate binding. Serine 174 (nucleophile) is an active-site residue. Residue asparagine 176 participates in substrate binding. FMN contacts are provided by lysine 216 and threonine 244. 245-246 (NT) serves as a coordination point for substrate. FMN is bound by residues glycine 267, glycine 296, and 317–318 (YT).

Belongs to the dihydroorotate dehydrogenase family. Type 2 subfamily. In terms of assembly, monomer. It depends on FMN as a cofactor.

It localises to the cell membrane. The enzyme catalyses (S)-dihydroorotate + a quinone = orotate + a quinol. The protein operates within pyrimidine metabolism; UMP biosynthesis via de novo pathway; orotate from (S)-dihydroorotate (quinone route): step 1/1. Functionally, catalyzes the conversion of dihydroorotate to orotate with quinone as electron acceptor. The chain is Dihydroorotate dehydrogenase (quinone) from Marinobacter nauticus (strain ATCC 700491 / DSM 11845 / VT8) (Marinobacter aquaeolei).